The sequence spans 351 residues: MLYSLLKKYLFSLDAEDAHEKVCKILKMLSSSPFLCNLIDSQWGYKNPKLENEILGLHFPNPLGLAAGFDKNASMLRALIAFGFGYLEAGTLTNEAQMGNERPRLFRHIEEESLQNAMGFNNHGAVLGVRSFKHFAPYKTPIGINLGKNKHIEQAHALEDYKAVLNKCLNIGDYYTFNLSSPNTPNLRDLQNKAFVNELFCMAKEMTHKPLFLKIAPDLETDDMLEIVNSAIGAGAHGIIATNTTIDKSLVFAPKEMGGLSGKCLTKKSREIFKELAKAFFNQSVLVSVGGISDAKEAYERIKMGASLLQIYSAFIYNGPNLCQNILKDLVKLLQKDGFLSVKEAIGADLR.

FMN-binding positions include 67-71 (AGFDK) and threonine 91. Position 71 (lysine 71) interacts with substrate. 116–120 (NAMGF) provides a ligand contact to substrate. FMN-binding residues include asparagine 145 and asparagine 178. Asparagine 178 is a substrate binding site. Serine 181 (nucleophile) is an active-site residue. Substrate is bound at residue asparagine 183. Residues lysine 214 and threonine 242 each coordinate FMN. 243–244 (NT) contacts substrate. Residues glycine 262, glycine 291, and 312–313 (YS) contribute to the FMN site.

It belongs to the dihydroorotate dehydrogenase family. Type 2 subfamily. In terms of assembly, monomer. FMN is required as a cofactor.

The protein localises to the cell membrane. The catalysed reaction is (S)-dihydroorotate + a quinone = orotate + a quinol. The protein operates within pyrimidine metabolism; UMP biosynthesis via de novo pathway; orotate from (S)-dihydroorotate (quinone route): step 1/1. In terms of biological role, catalyzes the conversion of dihydroorotate to orotate with quinone as electron acceptor. This is Dihydroorotate dehydrogenase (quinone) from Helicobacter pylori (strain P12).